The chain runs to 218 residues: N-(5'-phosphoribosyl)anthranilate isomerase (218 aa).

This sequence belongs to the TrpF family.

The catalysed reaction is N-(5-phospho-beta-D-ribosyl)anthranilate = 1-(2-carboxyphenylamino)-1-deoxy-D-ribulose 5-phosphate. It participates in amino-acid biosynthesis; L-tryptophan biosynthesis; L-tryptophan from chorismate: step 3/5. The polypeptide is N-(5'-phosphoribosyl)anthranilate isomerase (Chelativorans sp. (strain BNC1)).